The following is a 439-amino-acid chain: Tol-Pal system protein TolB (439 aa).

An N-terminal signal peptide occupies residues 1–22; that stretch reads MTKFPRWLAMLVGLLFPLSALT.

It belongs to the TolB family. In terms of assembly, the Tol-Pal system is composed of five core proteins: the inner membrane proteins TolA, TolQ and TolR, the periplasmic protein TolB and the outer membrane protein Pal. They form a network linking the inner and outer membranes and the peptidoglycan layer.

The protein localises to the periplasm. Part of the Tol-Pal system, which plays a role in outer membrane invagination during cell division and is important for maintaining outer membrane integrity. This is Tol-Pal system protein TolB from Xylella fastidiosa (strain Temecula1 / ATCC 700964).